Reading from the N-terminus, the 491-residue chain is Probable glycine dehydrogenase (decarboxylating) subunit 2 (491 aa).

K273 is modified (N6-(pyridoxal phosphate)lysine).

It belongs to the GcvP family. C-terminal subunit subfamily. In terms of assembly, the glycine cleavage system is composed of four proteins: P, T, L and H. In this organism, the P 'protein' is a heterodimer of two subunits. Requires pyridoxal 5'-phosphate as cofactor.

It carries out the reaction N(6)-[(R)-lipoyl]-L-lysyl-[glycine-cleavage complex H protein] + glycine + H(+) = N(6)-[(R)-S(8)-aminomethyldihydrolipoyl]-L-lysyl-[glycine-cleavage complex H protein] + CO2. Its function is as follows. The glycine cleavage system catalyzes the degradation of glycine. The P protein binds the alpha-amino group of glycine through its pyridoxal phosphate cofactor; CO(2) is released and the remaining methylamine moiety is then transferred to the lipoamide cofactor of the H protein. This chain is Probable glycine dehydrogenase (decarboxylating) subunit 2, found in Bacillus thuringiensis (strain Al Hakam).